The sequence spans 508 residues: MNIFSHANLGTTEERGDDAKRTILAGTDIVGDILKTTLGPKGMLKMLKGQHVNVTNDGAFILNNLMIDSPSARILIGSSTGQDWEEGDGTTSVAILASLLVKEAGKLEMHPTKILRGYRMAQAKCEEILSSISFEATKEDLLKLVRTTLCSKVLRYDLERFCEICVNAVEKLEGRNDLNLIQIIKCSGKLEDSYLDDGFLLKKDIRIDDVVNPRVLIANTSMDQDKIKVFGAKINVNSVGELEEMEKAEKIKIKGKVERISQNGVNVFVNRQLVYDYPLQLLRMKGIQAIEHADFDGVERLNNVLGGKILSTFDNMDESCYGTCESIRNVHVGNERMIKFSGVRSGASTIVLCGSSKEMLDEAERSVHDALCVLAKIKEDPRVIYGGGSSEMAMAVGLNKYAMEVPGAESDAILAFSSALQQIPKILADNGGYNGESIKASLRAEHNSGRTSYGVNVRNGSIGCMKEAGVVDSLRIKHRVVTAASETAQMIIKCDAIVKCKPRERTRE.

This sequence belongs to the TCP-1 chaperonin family. As to quaternary structure, component of the T-complex protein 1 (TCP1) complex.

It localises to the cytoplasm. Molecular chaperone; assists the folding of proteins upon ATP hydrolysis. The chain is T-complex protein 1 subunit beta (CCT2) from Encephalitozoon cuniculi (strain GB-M1) (Microsporidian parasite).